The sequence spans 337 residues: Diacylglycerol O-acyltransferase 2-like protein 6 (337 aa).

The next 2 membrane-spanning stretches (helical) occupy residues 22–42 and 102–122; these read IPVYIFLGAIPILLIPYFLLF and YIIANHPHGILSFGVFINFAT.

The protein belongs to the diacylglycerol acyltransferase family. As to expression, expressed in all tissues tested except pancreas.

The protein resides in the endoplasmic reticulum membrane. It catalyses the reaction 1,2-di-(9Z-octadecenoyl)-sn-glycerol + (9Z)-octadecenoyl-CoA = 1,2,3-tri-(9Z-octadecenoyl)-glycerol + CoA. The enzyme catalyses 1-O-(9Z-octadecenyl)-glycerol + (9Z)-octadecenoyl-CoA = 1-O-(9Z-octadecyl)-3-(9Z-octadecenoyl)-glycerol + CoA. The catalysed reaction is 1-(9Z-octadecenoyl)-glycerol + (9Z)-octadecenoyl-CoA = 1,2-di-(9Z-octadecenoyl)-glycerol + CoA. In terms of biological role, diglyceride acyltransferase that uses fatty acyl-CoA as substrate. Particularly active with oleate as a substrate. Has no wax synthase activity to produce wax esters. Able to use 1-monoalkylglycerol (1-MAkG) as an acyl acceptor for the synthesis of monoalkyl-monoacylglycerol (MAMAG). The protein is Diacylglycerol O-acyltransferase 2-like protein 6 of Homo sapiens (Human).